A 303-amino-acid polypeptide reads, in one-letter code: Glutathione transport system permease protein GsiD (303 aa).

The next 6 helical transmembrane spans lie at 40-60, 105-125, 144-164, 165-185, 222-242, and 266-286; these read AMTA…ARWI, LAAG…LGLL, LFAF…GSGI, ANVI…LVRG, IVVF…SLSF, and VIAP…VLAF. Residues 101-290 form the ABC transmembrane type-1 domain; that stretch reads AQISLAAGVF…LTVLAFNLLG (190 aa).

Belongs to the binding-protein-dependent transport system permease family. As to quaternary structure, the complex is composed of two ATP-binding proteins (GsiA), two transmembrane proteins (GsiC and GsiD) and a solute-binding protein (GsiB).

It is found in the cell inner membrane. In terms of biological role, part of the ABC transporter complex GsiABCD involved in glutathione import. Probably responsible for the translocation of the substrate across the membrane. This chain is Glutathione transport system permease protein GsiD, found in Shigella dysenteriae serotype 1 (strain Sd197).